Reading from the N-terminus, the 252-residue chain is MGVLLTQRTLLSLVLALLFPSMASMAAIGSCSKEYRVLLGQLQKQTDLMQDTSRLLDPYIRIQGLDVPKLREHCRERPGAFPSEETLRGLGRRGFLQTLNATLGCVLHRLADLEQRLPKAQDLERSGLNIEDLEKLQMARPNILGLRNNIYCMAQLLDNSDTAEPTKAGRGASQPPTPTPASDAFQRKLEGCRFLHGYHRFMHSVGRVFSKWGESPNRSRRHSPHQALRKGVRRTRPSRKGKRLMTRGQLPR.

The N-terminal stretch at 1 to 25 (MGVLLTQRTLLSLVLALLFPSMASM) is a signal peptide. Cystine bridges form between cysteine 31–cysteine 152 and cysteine 74–cysteine 192. N-linked (GlcNAc...) asparagine glycosylation is present at asparagine 100. Disordered regions lie at residues 162 to 184 (TAEP…ASDA) and 213 to 252 (GESP…QLPR). An N-linked (GlcNAc...) asparagine glycan is attached at asparagine 217. The segment covering 218–245 (RSRRHSPHQALRKGVRRTRPSRKGKRLM) has biased composition (basic residues). Residues 222-252 (HSPHQALRKGVRRTRPSRKGKRLMTRGQLPR) constitute a propeptide that is removed on maturation.

Belongs to the LIF/OSM family. In terms of processing, propeptide processing is not important for receptor binding activity but may be important growth-inhibitory activity.

It localises to the secreted. Functionally, growth regulator. Inhibits the proliferation of a number of tumor cell lines. Stimulates proliferation of AIDS-KS cells. It regulates cytokine production, including IL-6, G-CSF and GM-CSF from endothelial cells. Uses both type I OSM receptor (heterodimers composed of LIFR and IL6ST) and type II OSM receptor (heterodimers composed of OSMR and IL6ST). Involved in the maturation of fetal hepatocytes, thereby promoting liver development and regeneration. This Homo sapiens (Human) protein is Oncostatin-M (OSM).